The primary structure comprises 128 residues: Holin-like protein CidA (128 aa).

4 consecutive transmembrane segments (helical) span residues L4–V24, A26–L46, G59–I79, and F88–G108.

This sequence belongs to the CidA/LrgA family. CidA subfamily.

Its subcellular location is the cell membrane. In terms of biological role, increases the activity of extracellular murein hydrolases possibly by mediating their export via hole formation. Inhibited by the antiholin-like proteins LrgAB. In an unstressed cell, the LrgAB products probably inhibit the function of the CidA protein. When a cell is stressed by the addition of antibiotics or by other factors in the environment, CidA possibly oligomerizes within the bacterial cell membrane, creating lesions that disrupt the proton motive force, which in turn results in loss of cell viability. These lesions are also hypothesized to regulate the subsequent cell lysis by either allowing the murein hydrolases access to the cell wall substrate and/or regulating their activity by a possible change in the cell wall pH that results from loss of membrane potential. The chain is Holin-like protein CidA from Bacillus subtilis (strain 168).